The chain runs to 445 residues: Argininosuccinate synthase (445 aa).

Residues 17-25 (AFSGGLDTS) and Ala-43 each bind ATP. Tyr-99 lines the L-citrulline pocket. Residues Gly-129 and Thr-131 each contribute to the ATP site. Positions 131, 135, and 136 each coordinate L-aspartate. Residue Asn-135 coordinates L-citrulline. Asp-136 serves as a coordination point for ATP. Residues Arg-139 and Ser-192 each contribute to the L-citrulline site. Residue Asp-194 coordinates ATP. Residues Thr-201, Glu-203, and Glu-280 each contribute to the L-citrulline site.

This sequence belongs to the argininosuccinate synthase family. Type 2 subfamily. Homotetramer.

The protein resides in the cytoplasm. The catalysed reaction is L-citrulline + L-aspartate + ATP = 2-(N(omega)-L-arginino)succinate + AMP + diphosphate + H(+). The protein operates within amino-acid biosynthesis; L-arginine biosynthesis; L-arginine from L-ornithine and carbamoyl phosphate: step 2/3. This is Argininosuccinate synthase from Burkholderia cenocepacia (strain HI2424).